Here is a 1771-residue protein sequence, read N- to C-terminus: Myosin-H heavy chain (1771 aa).

Positions 7-57 constitute a Myosin N-terminal SH3-like domain; that stretch reads CGKEKVWVPNPEKGWINGDLIKEIPGEGWLVRDENGKEIKIEKDELRMQNP. The Myosin motor domain maps to 61–840; it reads EGIDDMTSLS…IIANLELLRS (780 aa). 154-161 is a binding site for ATP; the sequence is GESGAGKT. The actin-binding stretch occupies residues 690–712; the sequence is LNSLMTTINSTNPHYIRCIKPNT. IQ domains are found at residues 843-872, 866-895, and 940-969; these read MINS…SSIY, TKHS…ENSA, and RIKK…EAKS. 3 disordered regions span residues 1070-1176, 1218-1282, and 1312-1343; these read EKQH…NNVD, VKKS…PINM, and LNNG…KHIQ. Polar residues predominate over residues 1077-1111; the sequence is YKNNEVVGNTSFEGSTTTNNGVTSPPKSSPASPIR. Positions 1112–1139 are enriched in low complexity; sequence NSINSNSDTTISGSSDDSIDNTDSLILS. Residues 1143 to 1153 are compositionally biased toward basic and acidic residues; it reads HKGEDRKRNHE. The stretch at 1180–1224 forms a coiled coil; sequence RRQFNELEKEYKELKQMDETHKQYIESLKLQITQLEEKVKKSSSH. A compositionally biased stretch (low complexity) spans 1253–1281; that stretch reads NSSSHHQQQQQQHNISPSNSITSTTSPIN. Residues 1427–1695 form the Dilute domain; it reads TGVLDPIETN…LTSLMDSPKY (269 aa).

The protein belongs to the TRAFAC class myosin-kinesin ATPase superfamily. Myosin family. As to quaternary structure, myosin I heavy chain is single-headed. Dimer of a heavy and a light chain. Inability to self-assemble into filaments.

In terms of biological role, myosin is a protein that binds to actin and has ATPase activity that is activated by actin. This is Myosin-H heavy chain (myoH) from Dictyostelium discoideum (Social amoeba).